The sequence spans 329 residues: Tagatose 1,6-diphosphate aldolase 2 (329 aa).

The protein belongs to the aldolase LacD family.

It catalyses the reaction D-tagatofuranose 1,6-bisphosphate = D-glyceraldehyde 3-phosphate + dihydroxyacetone phosphate. Its pathway is carbohydrate metabolism; D-tagatose 6-phosphate degradation; D-glyceraldehyde 3-phosphate and glycerone phosphate from D-tagatose 6-phosphate: step 2/2. The chain is Tagatose 1,6-diphosphate aldolase 2 (lacD2) from Streptococcus mutans serotype c (strain ATCC 700610 / UA159).